Here is a 29-residue protein sequence, read N- to C-terminus: Varv peptide D (29 aa).

The cyclopeptide (Gly-Asn) cross-link spans 1-29; the sequence is GLPICGETCVGGSCNTPGCSCSWPVCTRN. 3 disulfide bridges follow: Cys5–Cys19, Cys9–Cys21, and Cys14–Cys26.

This is a cyclic peptide.

Probably participates in a plant defense mechanism. In Viola arvensis (European field pansy), this protein is Varv peptide D.